The following is a 448-amino-acid chain: Binary larvicide subunit BinB (448 aa).

A beta-trefoil domain region spans residues 1-198 (MCDSKDNSGV…TAFVNSSFYA (198 aa)). The cysteines at positions 67 and 161 are disulfide-linked. A probable pore-forming domain region spans residues 199–448 (AAIPQLPQTS…NEELIPKINQ (250 aa)).

It belongs to the toxin_10 family. In terms of assembly, forms a heterodimer with BinA. In terms of processing, processed by proteases extracted from mosquito larval gut.

The protein resides in the spore. The protein localises to the perispore. Its function is as follows. Component of a binary toxin active against Culex and some Aedes mosquito larvae; mortality towards both C.quinquefasciatus and A.atropalpus is maximal by 48 hours. A.aegypti is not very susceptible to this toxin. This subunit is responsible for localized binding to specific regions of the host larval gut. Binary toxin internalization into host gut cells requires both proteins. The protein is Binary larvicide subunit BinB (binB) of Lysinibacillus sphaericus (Bacillus sphaericus).